Reading from the N-terminus, the 206-residue chain is Small ribosomal subunit protein uS4 (206 aa).

Residues 96-157 (CRLDNVVYRM…KCRNQLRIAQ (62 aa)) form the S4 RNA-binding domain.

It belongs to the universal ribosomal protein uS4 family. Part of the 30S ribosomal subunit. Contacts protein S5. The interaction surface between S4 and S5 is involved in control of translational fidelity.

Its function is as follows. One of the primary rRNA binding proteins, it binds directly to 16S rRNA where it nucleates assembly of the body of the 30S subunit. Functionally, with S5 and S12 plays an important role in translational accuracy. This Stutzerimonas stutzeri (strain A1501) (Pseudomonas stutzeri) protein is Small ribosomal subunit protein uS4.